We begin with the raw amino-acid sequence, 170 residues long: Acireductone dioxygenase (170 aa).

4 residues coordinate Fe(2+): H99, H101, E105, and H144. 4 residues coordinate Ni(2+): H99, H101, E105, and H144.

Belongs to the acireductone dioxygenase (ARD) family. In terms of assembly, monomer. Requires Fe(2+) as cofactor. The cofactor is Ni(2+).

It catalyses the reaction 1,2-dihydroxy-5-(methylsulfanyl)pent-1-en-3-one + O2 = 3-(methylsulfanyl)propanoate + CO + formate + 2 H(+). The enzyme catalyses 1,2-dihydroxy-5-(methylsulfanyl)pent-1-en-3-one + O2 = 4-methylsulfanyl-2-oxobutanoate + formate + 2 H(+). Its pathway is amino-acid biosynthesis; L-methionine biosynthesis via salvage pathway; L-methionine from S-methyl-5-thio-alpha-D-ribose 1-phosphate: step 5/6. Its function is as follows. Catalyzes 2 different reactions between oxygen and the acireductone 1,2-dihydroxy-3-keto-5-methylthiopentene (DHK-MTPene) depending upon the metal bound in the active site. Fe-containing acireductone dioxygenase (Fe-ARD) produces formate and 2-keto-4-methylthiobutyrate (KMTB), the alpha-ketoacid precursor of methionine in the methionine recycle pathway. Ni-containing acireductone dioxygenase (Ni-ARD) produces methylthiopropionate, carbon monoxide and formate, and does not lie on the methionine recycle pathway. The protein is Acireductone dioxygenase of Bacillus cereus (strain ATCC 10987 / NRS 248).